A 320-amino-acid chain; its full sequence is Methionyl-tRNA formyltransferase (320 aa).

112–115 (SLLP) is a binding site for (6S)-5,6,7,8-tetrahydrofolate.

The protein belongs to the Fmt family.

It catalyses the reaction L-methionyl-tRNA(fMet) + (6R)-10-formyltetrahydrofolate = N-formyl-L-methionyl-tRNA(fMet) + (6S)-5,6,7,8-tetrahydrofolate + H(+). Its function is as follows. Attaches a formyl group to the free amino group of methionyl-tRNA(fMet). The formyl group appears to play a dual role in the initiator identity of N-formylmethionyl-tRNA by promoting its recognition by IF2 and preventing the misappropriation of this tRNA by the elongation apparatus. This Allorhizobium ampelinum (strain ATCC BAA-846 / DSM 112012 / S4) (Agrobacterium vitis (strain S4)) protein is Methionyl-tRNA formyltransferase.